Consider the following 379-residue polypeptide: 1-deoxy-D-xylulose 5-phosphate reductoisomerase (379 aa).

NADPH-binding residues include T10, G11, S12, I13, N39, and N121. K122 contacts 1-deoxy-D-xylulose 5-phosphate. E123 lines the NADPH pocket. D147 lines the Mn(2+) pocket. Positions 148, 149, 173, and 196 each coordinate 1-deoxy-D-xylulose 5-phosphate. E149 lines the Mn(2+) pocket. G202 provides a ligand contact to NADPH. Residues S209, N214, K215, and E218 each contribute to the 1-deoxy-D-xylulose 5-phosphate site. E218 contributes to the Mn(2+) binding site.

It belongs to the DXR family. Requires Mg(2+) as cofactor. It depends on Mn(2+) as a cofactor.

It catalyses the reaction 2-C-methyl-D-erythritol 4-phosphate + NADP(+) = 1-deoxy-D-xylulose 5-phosphate + NADPH + H(+). It functions in the pathway isoprenoid biosynthesis; isopentenyl diphosphate biosynthesis via DXP pathway; isopentenyl diphosphate from 1-deoxy-D-xylulose 5-phosphate: step 1/6. Catalyzes the NADPH-dependent rearrangement and reduction of 1-deoxy-D-xylulose-5-phosphate (DXP) to 2-C-methyl-D-erythritol 4-phosphate (MEP). The chain is 1-deoxy-D-xylulose 5-phosphate reductoisomerase from Chlamydia felis (strain Fe/C-56) (Chlamydophila felis).